An 885-amino-acid polypeptide reads, in one-letter code: DNA replication licensing factor REC (885 aa).

The segment at 36 to 76 (RVIPAGGNRQPNQGEPGAPDAPSVPPATRQPRGWSRTAGKR) is disordered. The C4-type zinc finger occupies 281-308 (CSRCQMEIAMRQRGTFQPRPYQCKRSEC). The MCM domain maps to 430–627 (SFKLLVQSIA…ERDMSLTAHV (198 aa)). 473-480 (GDPGIGKT) lines the ATP pocket. Over residues 796–805 (SLKEGSSRQG) the composition is skewed to polar residues. Residues 796-818 (SLKEGSSRQGTRGGGGAGGGAGK) form a disordered region. The span at 806–817 (TRGGGGAGGGAG) shows a compositional bias: gly residues.

The protein belongs to the MCM family.

The protein localises to the nucleus. Its function is as follows. Required for meiotic DNA recombination in females. Probably not involved in DNA repair and recombination in somatic cells. This chain is DNA replication licensing factor REC (rec), found in Drosophila melanogaster (Fruit fly).